The following is a 677-amino-acid chain: Beta-galactosidase (677 aa).

The signal sequence occupies residues 1–23; it reads MPGFLVRILPLLLVLLLLGPTRG. The propeptide occupies 24 to 28; sequence LRNAT. N-linked (GlcNAc...) asparagine glycosylation is present at Asn26. Tyr83, Glu129, and Asn187 together coordinate substrate. Residue Glu188 is the Proton donor of the active site. Residues Cys195 and Cys230 are joined by a disulfide bond. A glycan (N-linked (GlcNAc...) asparagine) is linked at Asn247. The active-site Nucleophile is Glu268. Tyr333 is a binding site for substrate. N-linked (GlcNAc...) asparagine glycans are attached at residues Asn464, Asn498, Asn542, Asn545, and Asn555. Residues Cys626 and Cys634 are joined by a disulfide bond. A disordered region spans residues 650–677; that stretch reads YDHPSKPVEKRLMPPPPQKNKDSWLDHV. Composition is skewed to basic and acidic residues over residues 652 to 661 and 668 to 677; these read HPSKPVEKRL and KNKDSWLDHV.

This sequence belongs to the glycosyl hydrolase 35 family. In terms of assembly, homodimer. May form higher multimers. In terms of tissue distribution, detected in placenta (at protein level). Detected in fibroblasts and testis.

It is found in the lysosome. The protein localises to the cytoplasm. The protein resides in the perinuclear region. The catalysed reaction is Hydrolysis of terminal non-reducing beta-D-galactose residues in beta-D-galactosides.. In terms of biological role, cleaves beta-linked terminal galactosyl residues from gangliosides, glycoproteins, and glycosaminoglycans. Functionally, has no beta-galactosidase catalytic activity, but plays functional roles in the formation of extracellular elastic fibers (elastogenesis) and in the development of connective tissue. Seems to be identical to the elastin-binding protein (EBP), a major component of the non-integrin cell surface receptor expressed on fibroblasts, smooth muscle cells, chondroblasts, leukocytes, and certain cancer cell types. In elastin producing cells, associates with tropoelastin intracellularly and functions as a recycling molecular chaperone which facilitates the secretions of tropoelastin and its assembly into elastic fibers. The protein is Beta-galactosidase (GLB1) of Homo sapiens (Human).